We begin with the raw amino-acid sequence, 408 residues long: Probable pectate lyase 18 (408 aa).

Residues 1 to 24 (MKMQTKKLFITIVSFLLYAPLFLS) form the signal peptide. Asn-42 carries N-linked (GlcNAc...) asparagine glycosylation. Asp-206, Asp-230, and Asp-234 together coordinate Ca(2+). Residue Arg-286 is part of the active site.

Belongs to the polysaccharide lyase 1 family. It depends on Ca(2+) as a cofactor. Expressed in flowers, but not in leaves.

It carries out the reaction Eliminative cleavage of (1-&gt;4)-alpha-D-galacturonan to give oligosaccharides with 4-deoxy-alpha-D-galact-4-enuronosyl groups at their non-reducing ends.. Its pathway is glycan metabolism; pectin degradation; 2-dehydro-3-deoxy-D-gluconate from pectin: step 2/5. The protein is Probable pectate lyase 18 of Arabidopsis thaliana (Mouse-ear cress).